The chain runs to 402 residues: GDSL esterase/lipase At1g20120 (402 aa).

The signal sequence occupies residues methionine 1–serine 35. The disordered stretch occupies residues arginine 41–lysine 69. Pro residues predominate over residues asparagine 44–alanine 64. N-linked (GlcNAc...) asparagine glycosylation occurs at asparagine 73. Serine 85 functions as the Nucleophile in the catalytic mechanism. N-linked (GlcNAc...) asparagine glycans are attached at residues asparagine 314 and asparagine 367. Active-site residues include aspartate 375 and histidine 378.

Belongs to the 'GDSL' lipolytic enzyme family.

The protein localises to the secreted. This Arabidopsis thaliana (Mouse-ear cress) protein is GDSL esterase/lipase At1g20120.